Consider the following 213-residue polypeptide: Urease accessory protein UreG (213 aa).

Gly10 to Thr17 serves as a coordination point for GTP.

It belongs to the SIMIBI class G3E GTPase family. UreG subfamily. As to quaternary structure, homodimer. UreD, UreF and UreG form a complex that acts as a GTP-hydrolysis-dependent molecular chaperone, activating the urease apoprotein by helping to assemble the nickel containing metallocenter of UreC. The UreE protein probably delivers the nickel.

It localises to the cytoplasm. Its function is as follows. Facilitates the functional incorporation of the urease nickel metallocenter. This process requires GTP hydrolysis, probably effectuated by UreG. This chain is Urease accessory protein UreG, found in Deinococcus radiodurans (strain ATCC 13939 / DSM 20539 / JCM 16871 / CCUG 27074 / LMG 4051 / NBRC 15346 / NCIMB 9279 / VKM B-1422 / R1).